The sequence spans 202 residues: MVNYPHQLKGKKANPTPFKTKKSTVDFANRGMSFEAAINATNDYYLSRGIAVIHKKPTPIQIVKVDYPKRSRAKIVEAYFRQASTTDYSGVYKGLYIDFEAKETRQKTAMPMKNFHLHQIEHMASVLDQKGICFVLLHFSTLKETYYLPAKALIDFFQIDKGNKSMPLDYIKKNGYEIIQGAFPQVPYLDIIEQNFLGGDYN.

Mg(2+) is bound by residues Thr85, Asp87, Glu100, and Gln119.

This sequence belongs to the RecU family. The cofactor is Mg(2+).

It localises to the cytoplasm. It catalyses the reaction Endonucleolytic cleavage at a junction such as a reciprocal single-stranded crossover between two homologous DNA duplexes (Holliday junction).. Its function is as follows. Endonuclease that resolves Holliday junction intermediates in genetic recombination. Cleaves mobile four-strand junctions by introducing symmetrical nicks in paired strands. Promotes annealing of linear ssDNA with homologous dsDNA. Required for DNA repair, homologous recombination and chromosome segregation. In Streptococcus uberis (strain ATCC BAA-854 / 0140J), this protein is Holliday junction resolvase RecU.